A 259-amino-acid chain; its full sequence is 1,2-dihydroxy-1,2-dihydronaphthalene dehydrogenase (259 aa).

Position 8–32 (8–32 (SITGAGSGIGLELVRSFKSAGYYVS)) interacts with NAD(+). S140 is a substrate binding site. Y153 functions as the Proton acceptor in the catalytic mechanism.

The protein belongs to the short-chain dehydrogenases/reductases (SDR) family.

It catalyses the reaction (1R,2S)-1,2-dihydronaphthalene-1,2-diol + NAD(+) = naphthalene-1,2-diol + NADH + H(+). The enzyme catalyses cis-1,2-dihydroxy-1,2-dihydrodibenzothiophene + NAD(+) = 1,2-dihydroxydibenzothiophene + NADH + H(+). It functions in the pathway aromatic compound metabolism; naphthalene degradation. In terms of biological role, catalyzes the oxidation of naphthalene dihydrodiol into 1,2-dihydroxynaphthalene. The sequence is that of 1,2-dihydroxy-1,2-dihydronaphthalene dehydrogenase (doxE) from Pseudomonas sp. (strain C18).